Consider the following 205-residue polypeptide: ATP phosphoribosyltransferase (205 aa).

This sequence belongs to the ATP phosphoribosyltransferase family. Short subfamily. In terms of assembly, heteromultimer composed of HisG and HisZ subunits.

It is found in the cytoplasm. The catalysed reaction is 1-(5-phospho-beta-D-ribosyl)-ATP + diphosphate = 5-phospho-alpha-D-ribose 1-diphosphate + ATP. The protein operates within amino-acid biosynthesis; L-histidine biosynthesis; L-histidine from 5-phospho-alpha-D-ribose 1-diphosphate: step 1/9. In terms of biological role, catalyzes the condensation of ATP and 5-phosphoribose 1-diphosphate to form N'-(5'-phosphoribosyl)-ATP (PR-ATP). Has a crucial role in the pathway because the rate of histidine biosynthesis seems to be controlled primarily by regulation of HisG enzymatic activity. This Staphylococcus saprophyticus subsp. saprophyticus (strain ATCC 15305 / DSM 20229 / NCIMB 8711 / NCTC 7292 / S-41) protein is ATP phosphoribosyltransferase.